The sequence spans 458 residues: Probable plasmid replicative DNA helicase (458 aa).

An SF4 helicase domain is found at 194–458 (KIDYVDGLPT…GKFTIQKEAW (265 aa)). Residue 225–232 (ARPAMGKT) participates in ATP binding.

This sequence belongs to the helicase family. DnaB subfamily. In terms of assembly, homohexamer.

The catalysed reaction is Couples ATP hydrolysis with the unwinding of duplex DNA at the replication fork by translocating in the 5'-3' direction. This creates two antiparallel DNA single strands (ssDNA). The leading ssDNA polymer is the template for DNA polymerase III holoenzyme which synthesizes a continuous strand.. It carries out the reaction ATP + H2O = ADP + phosphate + H(+). In terms of biological role, a replicative DNA helicase, it participates in initiation and elongation during DNA replication. Travels ahead of the DNA replisome, separating dsDNA into templates for DNA synthesis. A processive ATP-dependent 5'-3' DNA helicase it has DNA-dependent ATPase activity. The polypeptide is Probable plasmid replicative DNA helicase (Chlamydia psittaci (Chlamydophila psittaci)).